Reading from the N-terminus, the 363-residue chain is tRNA(Met) cytidine acetate ligase (363 aa).

Residues 7-20, G96, N152, and R175 each bind ATP; that span reads IAEFNPFHNGHKYL.

This sequence belongs to the TmcAL family.

It localises to the cytoplasm. The enzyme catalyses cytidine(34) in elongator tRNA(Met) + acetate + ATP = N(4)-acetylcytidine(34) in elongator tRNA(Met) + AMP + diphosphate. In terms of biological role, catalyzes the formation of N(4)-acetylcytidine (ac(4)C) at the wobble position of elongator tRNA(Met), using acetate and ATP as substrates. First activates an acetate ion to form acetyladenylate (Ac-AMP) and then transfers the acetyl group to tRNA to form ac(4)C34. This chain is tRNA(Met) cytidine acetate ligase, found in Streptococcus gordonii (strain Challis / ATCC 35105 / BCRC 15272 / CH1 / DL1 / V288).